A 448-amino-acid polypeptide reads, in one-letter code: Vacuolar amino acid transporter 6 (448 aa).

At 1 to 7 (MVASIRS) the chain is on the cytoplasmic side. The helical transmembrane segment at 8–28 (GVLTLLHTACGAGILAMPYAF) threads the bilayer. Topologically, residues 29-32 (KPFG) are vacuolar. Residues 33 to 53 (LIPGVIMIVLCGACAMQSLFI) form a helical membrane-spanning segment. The Cytoplasmic segment spans residues 54–80 (QARVAKYVPQGRASFSALTRLINPNLG). The helical transmembrane segment at 81–101 (IVFDLAIAIKCFGVGVSYMIV) threads the bilayer. The Vacuolar segment spans residues 102–125 (VGDLMPQIMSVWTRNAWLLNRNVQ). Residues 126–146 (ISLIMLFFVAPLSFLKKLNSL) traverse the membrane as a helical segment. Topologically, residues 147-150 (RYAS) are cytoplasmic. Residues 151–171 (MVAISSVAYLCVLVLLHYVAP) traverse the membrane as a helical segment. Topologically, residues 172 to 195 (SDEILRLKGRISYLLPPQSHDLNV) are vacuolar. The helical transmembrane segment at 196–216 (LNTLPIFVFAYTCHHNMFSII) threads the bilayer. The Cytoplasmic portion of the chain corresponds to 217–229 (NEQRSSRFEHVMK). Residues 230 to 250 (IPLIAISLALILYIAIGCAGY) traverse the membrane as a helical segment. Residues 251 to 267 (LTFGDNIIGNIIMLYPQ) lie on the Vacuolar side of the membrane. Residues 268–288 (AVSSTIGRIAIVLLVMLAFPL) form a helical membrane-spanning segment. Residues 289–357 (QCHPARASIH…PKETPLRGKS (69 aa)) are Cytoplasmic-facing. Position 344 is a phosphoserine (Ser344). A helical transmembrane segment spans residues 358–378 (FIVITCSILVASYLVAISVSS). The Vacuolar portion of the chain corresponds to 379–381 (LAR). The helical transmembrane segment at 382–402 (VLAIVGATGSTSISFILPGLF) threads the bilayer. The Cytoplasmic segment spans residues 403-424 (GYKLIGTEHKTAVPLTTKIFKY). The chain crosses the membrane as a helical span at residues 425-445 (TGLLLFIWGLIIMITCLTAAL). Over 446 to 448 (KLN) the chain is Vacuolar.

Belongs to the amino acid/polyamine transporter 2 family.

The protein resides in the vacuole membrane. Functionally, involved in amino acid efflux from the vacuole to the cytoplasm. Capable of transporting aspartate and glutamate. Requires ATP for function. The chain is Vacuolar amino acid transporter 6 (AVT6) from Saccharomyces cerevisiae (strain ATCC 204508 / S288c) (Baker's yeast).